We begin with the raw amino-acid sequence, 223 residues long: Sigma non-opioid intracellular receptor 1 (223 aa).

Residues 1-9 (MCWAVGRRW) are Lumenal-facing. The segment at 2-8 (CWAVGRR) is targeting to endoplasmic reticulum-associated lipid droplets. The helical transmembrane segment at 10 to 30 (AWAALLLAVAAVLAQVVWLWL) threads the bilayer. Over 31 to 223 (GTQSFVFQHE…LTTYLFGQDA (193 aa)) the chain is Cytoplasmic. Residues 99–106 (SLSEYVLL) are important for ligand-binding. A C-terminal hydrophobic region region spans residues 177-223 (VIPSTLGFALADTVFSTQDFLTLFYTLRAYARGLRLELTTYLFGQDA).

It belongs to the ERG2 family. In terms of assembly, homotrimer. Forms a ternary complex with ANK2 and ITPR3. The complex is disrupted by agonists. Interacts with KCNA4. Interacts with KCNA2; cocaine consumption leads to increased interaction. Interacts with RNF112 in an oxidative stress-regulated manner.

It localises to the nucleus inner membrane. The protein localises to the nucleus outer membrane. Its subcellular location is the nucleus envelope. The protein resides in the cytoplasmic vesicle. It is found in the endoplasmic reticulum membrane. It localises to the membrane. The protein localises to the lipid droplet. Its subcellular location is the cell junction. The protein resides in the cell membrane. It is found in the cell projection. It localises to the growth cone. The protein localises to the postsynaptic density membrane. Functionally, functions in lipid transport from the endoplasmic reticulum and is involved in a wide array of cellular functions probably through regulation of the biogenesis of lipid microdomains at the plasma membrane. Involved in the regulation of different receptors it plays a role in BDNF signaling and EGF signaling. Also regulates ion channels like the potassium channel and could modulate neurotransmitter release. Plays a role in calcium signaling through modulation together with ANK2 of the ITP3R-dependent calcium efflux at the endoplasmic reticulum. Plays a role in several other cell functions including proliferation, survival and death. Originally identified for its ability to bind various psychoactive drugs it is involved in learning processes, memory and mood alteration. Necessary for proper mitochondrial axonal transport in motor neurons, in particular the retrograde movement of mitochondria. Plays a role in protecting cells against oxidative stress-induced cell death via its interaction with RNF112. In Bos taurus (Bovine), this protein is Sigma non-opioid intracellular receptor 1 (SIGMAR1).